A 422-amino-acid chain; its full sequence is tRNA hydroxylation protein P (422 aa).

The N-terminal stretch at 1–58 (MNQVELLSPAGNLKKLKIALNYGADAVYGGVSHFSLRNRAGKEFTLETFKEGIDYAHA) is a signal peptide.

It belongs to the peptidase U32 family.

Functionally, involved in prephenate-dependent formation of 5-hydroxyuridine (ho5U) modification at position 34 in tRNAs, the first step in 5-carboxymethoxyuridine (cmo5U) biosynthesis. This chain is tRNA hydroxylation protein P, found in Helicobacter pylori (strain J99 / ATCC 700824) (Campylobacter pylori J99).